Here is an 818-residue protein sequence, read N- to C-terminus: Probable beta-glucosidase I (818 aa).

An N-linked (GlcNAc...) asparagine glycan is attached at N176. D204 is a catalytic residue. The PA14 domain occupies 374–534 (DGKPGFTFRV…SQEELISNAV (161 aa)). Residues N453 and N472 are each glycosylated (N-linked (GlcNAc...) asparagine).

This sequence belongs to the glycosyl hydrolase 3 family.

It localises to the secreted. It carries out the reaction Hydrolysis of terminal, non-reducing beta-D-glucosyl residues with release of beta-D-glucose.. It participates in glycan metabolism; cellulose degradation. Functionally, beta-glucosidases are one of a number of cellulolytic enzymes involved in the degradation of cellulosic biomass. Catalyzes the last step releasing glucose from the inhibitory cellobiose. The protein is Probable beta-glucosidase I (bglI) of Aspergillus niger (strain ATCC MYA-4892 / CBS 513.88 / FGSC A1513).